Here is an 837-residue protein sequence, read N- to C-terminus: Katanin p80 WD40 repeat-containing subunit B1 homolog KTN80.4 (837 aa).

7 WD repeats span residues 14 to 54 (AHSA…AILS), 57 to 96 (GHSS…IVRT), 99 to 138 (GHRS…CIHT), 141 to 182 (GHTR…TEFK), 184 to 222 (HEGQ…LIGS), 225 to 265 (PETA…DGVD), and 267 to 304 (GWSR…TEPC). A DWD box motif is present at residues 115 to 131 (FFASGSLDTNLKIWDIR). Disordered regions lie at residues 307–328 (GDTA…DPVV), 358–462 (GRLS…ANPV), and 501–614 (LQAA…LVIN). 2 stretches are compositionally biased toward polar residues: residues 376-387 (IGRSSTSQNSES) and 412-450 (TFSS…TSRR). Over residues 509 to 520 (SPSSRNNPDLPD) the composition is skewed to low complexity. 2 stretches are compositionally biased toward basic and acidic residues: residues 553–563 (ATERSINDFRY) and 580–595 (RNHD…RSNR).

The protein belongs to the WD repeat KATNB1 family. Component of KTN80-KTN1 complexes composed of a hexamer of KTN1-KTN80 heterodimers that sense microtubule (MT) geometry to confer precise MT severing. Interacts directly with AAA1/KTN1, and weakly with KTN80.1 and KTN80.3. As to expression, expressed in siliques, flowers, leaves, stems and roots.

Its subcellular location is the cytoplasm. The protein resides in the cytoskeleton. In terms of biological role, may participate in a complex which severs microtubules in an ATP-dependent manner. This activity may promote rapid reorganization of cellular microtubule arrays. Confers precision to microtubule (MT) severing by specific targeting of KTN1 to MT cleavage sites such as crossover or branching nucleation sites. Together with other KTN80s, regulates cell elongation by modulating MT organization. This is Katanin p80 WD40 repeat-containing subunit B1 homolog KTN80.4 from Arabidopsis thaliana (Mouse-ear cress).